Here is a 441-residue protein sequence, read N- to C-terminus: MLSSVMAPLWACILVAAGILATDTHHPQDSALYHLSKQLLQKYHKEVRPVYNWTKATTVYLDLFVHAILDVDAENQILKTSVWYQEVWNDEFLSWNSSMFDEIREISLPLSAIWAPDIIINEFVDIERYPDLPYVYVNSSGTIENYKPIQVVSACSLETYAFPFDVQNCSLTFKSILHTVEDVDLAFLRSPEDIQHDKKAFLNDSEWELLSVSSTYSILQSSAGGFAQIQFNVVMRRHPLVYVVSLLIPSIFLMLVDLGSFYLPPNCRARIVFKTSVLVGYTVFRVNMSNQVPRSVGSTPLIGHFFTICMAFLVLSLAKSIVLVKFLHDEQRGGQEQPFLCLRGDTDADRPRVEPRAQRAVVTESSLYGEHLAQPGTLKEVWSQLQSISNYLQTQDQTDQQEAEWLVLLSRFDRLLFQSYLFMLGIYTITLCSLWALWGGV.

An N-terminal signal peptide occupies residues M1 to A21. The Extracellular segment spans residues T22–H238. 5 N-linked (GlcNAc...) asparagine glycosylation sites follow: N52, N96, N138, N168, and N203. The cysteines at positions 155 and 169 are disulfide-linked. A helical membrane pass occupies residues P239–G259. Residues S260–R268 lie on the Cytoplasmic side of the membrane. A helical membrane pass occupies residues A269–V286. N-linked (GlcNAc...) asparagine glycosylation is present at N287. Over N287–G303 the chain is Extracellular. The chain crosses the membrane as a helical span at residues H304–V324. Over K325 to R414 the chain is Cytoplasmic. Residues V381–D413 form an HA-stretch; determines single-channel conductance in 5-HT3 receptors region. Residues L415–W435 form a helical membrane-spanning segment. The Extracellular segment spans residues A436 to V441.

Belongs to the ligand-gated ion channel (TC 1.A.9) family. 5-hydroxytryptamine receptor (TC 1.A.9.2) subfamily. HTR3B sub-subfamily. Forms homopentameric as well as heteropentameric serotonin-activated cation-selective channel complexes with HTR3A. The homomeric complex is not functional. Heteropentameric complexes display properties which resemble that of neuronal serotonin-activated channels in vivo. In terms of processing, N-glycosylation required for membrane localization. In terms of tissue distribution, expressed in the brain cortex, in the caudate nucleus, the hippocampus, the thalamus and the amygdala. Detected in the kidney and testis as well as in monocytes of the spleen, small and large intestine, uterus, prostate, ovary and placenta.

It is found in the postsynaptic cell membrane. The protein localises to the cell membrane. It carries out the reaction Na(+)(in) = Na(+)(out). The catalysed reaction is K(+)(in) = K(+)(out). It catalyses the reaction Ca(2+)(in) = Ca(2+)(out). Functionally, forms serotonin (5-hydroxytryptamine/5-HT3)-activated cation-selective channel complexes, which when activated cause fast, depolarizing responses in neurons. This chain is 5-hydroxytryptamine receptor 3B, found in Homo sapiens (Human).